Reading from the N-terminus, the 379-residue chain is Cyclic dinucleotide synthase CdnE (379 aa).

UTP is bound by residues Gln107, Ser109, Asp123, and Lys179. Asp123 is a Mg(2+) binding site. Residue Asp193 coordinates Mg(2+). The UTP site is built by Asn229, Lys257, and Ser274. Residues 328–330 carry the Pyrimidine specificity motif (R/Q)xW in donor pocket motif; the sequence is KIF.

It belongs to the CD-NTase family. E02 subfamily. Mg(2+) serves as cofactor.

The catalysed reaction is 2 UTP = c-di-UMP + 2 diphosphate. It catalyses the reaction UTP + ATP = 3',3'-cUAMP + 2 diphosphate. It carries out the reaction UTP + CTP = cyclic CMP-UMP + 2 diphosphate. Cyclic nucleotide synthase (second messenger synthase) of a CBASS antivirus system. CBASS (cyclic oligonucleotide-based antiphage signaling system) provides immunity against bacteriophage. The CD-NTase protein synthesizes cyclic nucleotides in response to infection; these serve as specific second messenger signals. The signals activate a diverse range of effectors, leading to bacterial cell death and thus abortive phage infection. The effector protein for this system is membrane protein Cap15. A type I-B(UU) CBASS system. Functionally, cyclic dinucleotide synthase that preferentially catalyzes the synthesis of 3',3'-cyclic UMP-UMP (c-di-UMP) and 3',3'-cyclic UMP-AMP, with minor amounts of 3',3'-cyclic UMP-CMP, which are second messengers for cell signal transduction. Its function is as follows. Protects E.coli against phage infection. When the CBASS operon (cap15-cdnE) is introduced in E.coli MG1655 it protects against phages T2, T4, T5, T6, SECPhi4, SECPhi6, SECPhi17, SECPhi18 and SECPhi27, but not against phage T7. The polypeptide is Cyclic dinucleotide synthase CdnE (Yersinia aleksiciae).